The following is a 1378-amino-acid chain: Roundabout homolog 2 (1378 aa).

A signal peptide spans 1 to 21 (MSLLMFTQLLLCGFLYVRVDG). Residues 22–859 (SRLRQEDFPP…EQITDVVKQP (838 aa)) are Extracellular-facing. 5 Ig-like C2-type domains span residues 31 to 127 (PRIV…ASLE), 133 to 220 (DDFR…AELT), 225 to 309 (PTFL…ATLT), 314 to 409 (PQFV…LEVT), and 418 to 504 (PIIL…AVLD). C52 and C110 are disulfide-bonded. An N-linked (GlcNAc...) asparagine glycan is attached at N123. Cystine bridges form between C154–C203, C246–C293, and C335–C391. Residue N426 is glycosylated (N-linked (GlcNAc...) asparagine). A disulfide bridge links C439 with C488. Fibronectin type-III domains lie at 524–618 (PPSK…TQDI), 637–735 (VLVR…TEEA), and 739–836 (PPQS…IGRR). Positions 603-625 (LSDPSPMSDPVRTQDISPPAQGV) are disordered. Residues N752, N782, N789, and N845 are each glycosylated (N-linked (GlcNAc...) asparagine). The helical transmembrane segment at 860–880 (AFIAGIGGACWVILMGFSIWL) threads the bilayer. The Cytoplasmic portion of the chain corresponds to 881-1378 (YWRRKKRKGL…NSQGQFTGEL (498 aa)). 3 disordered regions span residues 1032–1084 (GFGY…PLPG), 1124–1156 (EDDD…LTPS), and 1215–1348 (DVAD…KTEV). Residues 1058-1067 (SSKPQKNNGS) show a composition bias toward low complexity. Residues 1141-1155 (PAISFGQQSTATLTP) show a composition bias toward polar residues. T1154 is subject to Phosphothreonine. S1156 is subject to Phosphoserine. Over residues 1215-1228 (DVADDDADDEEEAL) the composition is skewed to acidic residues. A compositionally biased stretch (polar residues) spans 1240-1285 (TPGSSMDNLDSSVTGKAFTSSQRPRPTSPFSTDSNTSAALSQSQRP). Residues 1319–1343 (SKPSFPSPGGHSSSGTASSKGSTGP) are compositionally biased toward low complexity.

The protein belongs to the immunoglobulin superfamily. ROBO family. As to quaternary structure, interacts with SLIT2.

Its subcellular location is the membrane. In terms of biological role, receptor for SLIT2, and probably SLIT1, which are thought to act as molecular guidance cue in cellular migration, including axonal navigation at the ventral midline of the neural tube and projection of axons to different regions during neuronal development. The polypeptide is Roundabout homolog 2 (ROBO2) (Homo sapiens (Human)).